The primary structure comprises 440 residues: MKVVLPDGRIPRRWYNILPDLPEPLDPPLDPETEEPIDIEKLKRIFAEELVKQEISRERYIEIPGELRKLYSKIGRPTPLFRATNLEKLLGTPARIYFKYEGATVTGSHKINTALAQAYYAKKQGIERLVTETGAGQWGTALSLAGALLGLKVRVYMARASYQQKPYRKTLMRIYGAEVFPSPSENTEVGKRFLKEDPNHPGSLGIAISEAIEDVLKDEKARYSLGSVLNHVLMHQTVIGLEAKEQMEEFEEPDVIIGCVGGGSNFAGLAYPFVKDVLDGKSEYEFIAVEPKAAPTMTRGVYTYDYGDSAGLTPKLKMHTLGHRYYVPPIHAGGLRYHGLAPTLSVLINHGIVKPIAYHQTEVFEAAVLFAKAEGIVPAPESAHAVKAVIDKALEARREGKEMVILFNLSGHGLLDLKGYEDYLDGKLEDYEPRDLPVKS.

The residue at position 110 (Lys110) is an N6-(pyridoxal phosphate)lysine.

It belongs to the TrpB family. Tetramer of two alpha and two beta chains. Pyridoxal 5'-phosphate is required as a cofactor.

The catalysed reaction is (1S,2R)-1-C-(indol-3-yl)glycerol 3-phosphate + L-serine = D-glyceraldehyde 3-phosphate + L-tryptophan + H2O. It participates in amino-acid biosynthesis; L-tryptophan biosynthesis; L-tryptophan from chorismate: step 5/5. Its function is as follows. The beta subunit is responsible for the synthesis of L-tryptophan from indole and L-serine. The protein is Tryptophan synthase beta chain 2 (trpB2) of Pyrococcus abyssi (strain GE5 / Orsay).